A 537-amino-acid chain; its full sequence is CTP synthase (537 aa).

The segment at 1-267 (MTKYIFVTGG…DQIVLDHFDV (267 aa)) is amidoligase domain. Serine 13 is a binding site for CTP. Residue serine 13 participates in UTP binding. 14–19 (SIGKGI) serves as a coordination point for ATP. Tyrosine 54 contributes to the L-glutamine binding site. Aspartate 71 is a binding site for ATP. Aspartate 71 and glutamate 141 together coordinate Mg(2+). CTP-binding positions include 148–150 (DIE), 188–193 (KTKPTQ), and lysine 224. UTP is bound by residues 188-193 (KTKPTQ) and lysine 224. The Glutamine amidotransferase type-1 domain occupies 292 to 535 (KIALVGKYVA…IDAANQTGKV (244 aa)). Glycine 354 is a binding site for L-glutamine. Cysteine 381 functions as the Nucleophile; for glutamine hydrolysis in the catalytic mechanism. L-glutamine-binding positions include 382 to 385 (LGMQ), glutamate 405, and arginine 463. Residues histidine 508 and glutamate 510 contribute to the active site.

It belongs to the CTP synthase family. Homotetramer.

It carries out the reaction UTP + L-glutamine + ATP + H2O = CTP + L-glutamate + ADP + phosphate + 2 H(+). The enzyme catalyses L-glutamine + H2O = L-glutamate + NH4(+). It catalyses the reaction UTP + NH4(+) + ATP = CTP + ADP + phosphate + 2 H(+). The protein operates within pyrimidine metabolism; CTP biosynthesis via de novo pathway; CTP from UDP: step 2/2. Allosterically activated by GTP, when glutamine is the substrate; GTP has no effect on the reaction when ammonia is the substrate. The allosteric effector GTP functions by stabilizing the protein conformation that binds the tetrahedral intermediate(s) formed during glutamine hydrolysis. Inhibited by the product CTP, via allosteric rather than competitive inhibition. In terms of biological role, catalyzes the ATP-dependent amination of UTP to CTP with either L-glutamine or ammonia as the source of nitrogen. Regulates intracellular CTP levels through interactions with the four ribonucleotide triphosphates. In Lactiplantibacillus plantarum (strain ATCC BAA-793 / NCIMB 8826 / WCFS1) (Lactobacillus plantarum), this protein is CTP synthase.